The primary structure comprises 497 residues: Cysteine-rich secretory protein LCCL domain-containing 2 (497 aa).

Residues 1-22 (MSCVLGGVIPLGLLFLVCGSQG) form the signal peptide. Asn27 is a glycosylation site (N-linked (GlcNAc...) asparagine). The 139-residue stretch at 62–200 (LHNKLRGQVQ…ENAVYFVCNY (139 aa)) folds into the SCP domain. LCCL domains lie at 284 to 379 (MTQV…SSSF) and 385 to 488 (KVQD…RDGK). Intrachain disulfides connect Cys290–Cys308, Cys312–Cys332, Cys391–Cys413, and Cys417–Cys440.

The protein belongs to the CRISP family. In terms of assembly, binds to heparin, dermatan sulfate and chondroitin sulfate.

It localises to the secreted. Functionally, promotes matrix assembly. This Homo sapiens (Human) protein is Cysteine-rich secretory protein LCCL domain-containing 2 (CRISPLD2).